We begin with the raw amino-acid sequence, 148 residues long: UPF0179 protein VNG_1401C (148 aa).

The protein belongs to the UPF0179 family.

This Halobacterium salinarum (strain ATCC 700922 / JCM 11081 / NRC-1) (Halobacterium halobium) protein is UPF0179 protein VNG_1401C.